Reading from the N-terminus, the 416-residue chain is Exodeoxyribonuclease 7 large subunit (416 aa).

Belongs to the XseA family. Heterooligomer composed of large and small subunits.

The protein resides in the cytoplasm. It carries out the reaction Exonucleolytic cleavage in either 5'- to 3'- or 3'- to 5'-direction to yield nucleoside 5'-phosphates.. In terms of biological role, bidirectionally degrades single-stranded DNA into large acid-insoluble oligonucleotides, which are then degraded further into small acid-soluble oligonucleotides. The chain is Exodeoxyribonuclease 7 large subunit from Acidothermus cellulolyticus (strain ATCC 43068 / DSM 8971 / 11B).